The sequence spans 614 residues: Zinc metalloproteinase-disintegrin-like VLAIP-B (614 aa).

Residues methionine 1–serine 20 form the signal peptide. Residues isoleucine 21 to glutamate 193 constitute a propeptide that is removed on maturation. At glutamine 194 the chain carries Pyrrolidone carboxylic acid. One can recognise a Peptidase M12B domain in the interval lysine 202–proline 398. A Ca(2+)-binding site is contributed by glutamate 205. Residue asparagine 262 is glycosylated (N-linked (GlcNAc...) asparagine). Position 289 (aspartate 289) interacts with Ca(2+). 3 disulfides stabilise this stretch: cysteine 313–cysteine 393, cysteine 353–cysteine 377, and cysteine 355–cysteine 360. Position 338 (histidine 338) interacts with Zn(2+). Residue glutamate 339 is part of the active site. Residues histidine 342 and histidine 348 each coordinate Zn(2+). Positions 393, 396, 408, 411, 413, 415, 418, and 421 each coordinate Ca(2+). The 87-residue stretch at proline 406–asparagine 492 folds into the Disintegrin domain. 14 cysteine pairs are disulfide-bonded: cysteine 409-cysteine 438, cysteine 420-cysteine 433, cysteine 422-cysteine 428, cysteine 432-cysteine 455, cysteine 446-cysteine 452, cysteine 451-cysteine 477, cysteine 464-cysteine 484, cysteine 471-cysteine 503, cysteine 496-cysteine 508, cysteine 515-cysteine 565, cysteine 530-cysteine 576, cysteine 543-cysteine 553, cysteine 560-cysteine 602, and cysteine 596-cysteine 607. The D/ECD-tripeptide motif lies at glutamate 470 to aspartate 472. Asparagine 505, asparagine 547, and asparagine 568 each carry an N-linked (GlcNAc...) asparagine glycan.

The protein belongs to the venom metalloproteinase (M12B) family. P-III subfamily. P-IIIc sub-subfamily. As to quaternary structure, heterodimer; disulfide-linked. Zn(2+) is required as a cofactor. Post-translationally, the N-terminus is blocked. Expressed by the venom gland.

It is found in the secreted. Inhibited by EDTA or 1,10-phenanthroline. Not inhibited by PMSF. Functionally, this metalloproteinase hydrolyzes azocasein, and insulin B-chain (at the '38-Ala-|-Leu-39' bond). Also hydrolyzes the Aalpha-chain (FGA) and more slowly the Bbeta-chain of fibrinogen (FGB), without affecting the gamma-chain. Cleaves alpha-chain of fibrinogen at '432-Lys-|-Leu-433' and '535-Pro-|-Met-536' bonds. Does not cleave fibrin. Inhibits endothelial cell adhesion to extracellular matrix proteins such as fibrinogen, fibronectin, vitronectin, collagen I, and collagen IV. Induces apoptosis in vascular endothelial cells. The protein is Zinc metalloproteinase-disintegrin-like VLAIP-B of Macrovipera lebetinus (Levantine viper).